The following is a 539-amino-acid chain: Chaperonin GroEL (539 aa).

ATP is bound by residues 29 to 32, 86 to 90, Gly-412, 475 to 477, and Asp-491; these read TLGP, DGTTT, and NAA.

It belongs to the chaperonin (HSP60) family. In terms of assembly, forms a cylinder of 14 subunits composed of two heptameric rings stacked back-to-back. Interacts with the co-chaperonin GroES.

It localises to the cytoplasm. The catalysed reaction is ATP + H2O + a folded polypeptide = ADP + phosphate + an unfolded polypeptide.. Functionally, together with its co-chaperonin GroES, plays an essential role in assisting protein folding. The GroEL-GroES system forms a nano-cage that allows encapsulation of the non-native substrate proteins and provides a physical environment optimized to promote and accelerate protein folding. This Tsukamurella tyrosinosolvens protein is Chaperonin GroEL.